The chain runs to 771 residues: Semaphorin-3A (771 aa).

Residues 1–20 (MGWLTRIVCLFWGVLLTARA) form the signal peptide. Residues 31–514 (RLKLSYKEML…STAGVAQLPL (484 aa)) form the Sema domain. N-linked (GlcNAc...) asparagine glycosylation is present at N53. A disulfide bridge connects residues C103 and C114. N-linked (GlcNAc...) asparagine glycosylation occurs at N125. Cystine bridges form between C132-C141, C269-C381, C293-C341, and C517-C535. The 85-residue stretch at 580–664 (PEERIIYGVE…GFIQTLLKVT (85 aa)) folds into the Ig-like C2-type domain. N-linked (GlcNAc...) asparagine glycosylation occurs at N590. Cysteines 649 and 722 form a disulfide. Residues 728-737 (RDRKQRRQRP) are compositionally biased toward basic residues. Residues 728 to 771 (RDRKQRRQRPGHTPGNSNKWKHLQENKKGRNRRTHEFERAPRSV) form a disordered region. The span at 749–771 (HLQENKKGRNRRTHEFERAPRSV) shows a compositional bias: basic and acidic residues.

This sequence belongs to the semaphorin family. Interacts with PLXND1. Expressed in the dorsal root ganglia.

It localises to the secreted. In terms of biological role, involved in the development of the olfactory system and in neuronal control of puberty. Induces the collapse and paralysis of neuronal growth cones. Could serve as a ligand that guides specific growth cones by a motility-inhibiting mechanism. Binds to the complex neuropilin-1/plexin-1. This Homo sapiens (Human) protein is Semaphorin-3A (SEMA3A).